Here is a 582-residue protein sequence, read N- to C-terminus: MSSSLGKEKDSKEKDPKAPSAKEREKEAKASGGFGKESKEKEPKTKGKDAKDGKKDSSAAQPGVAFSVDNTIKRPNPAPGTRKKSSNAEVIKELNKCREENSMRLDLSKRSIHILPSSIKELTQLTELYLYSNKLQSLPAEVGCLVNLMTLALSENSLTSLPDSLDNLKKLRMLDLRHNKLREIPSVVYRLDSLTTLYLRFNRITTVEKDIKNLSKLSMLSIRENKIKQLPAEIGELCNLITLDVAHNQLEHLPKEIGNCTQITNLDLQHNELLDLPDTIGNLSSLSRLGLRYNRLSAIPRSLAKCSALEELNLENNNISTLPESLLSSLVKLNSLTLARNCFQLYPVGGPSQFSTIYSLNMEHNRINKIPFGIFSRAKVLSKLNMKDNQLTSLPLDFGTWTSMVELNLATNQLTKIPEDVSGLVSLEVLILSNNLLKKLPHGLGNLRKLRELDLEENKLESLPNEIAYLKDLQKLVLTNNQLTTLPRGIGHLTNLTHLGLGENLLTHLPEEIGTLENLEELYLNDNPNLHSLPFELALCSKLSIMSIENCPLSHLPPQIVAGGPSFIIQFLKMQGPYRAMV.

2 stretches are compositionally biased toward basic and acidic residues: residues 1–29 (MSSS…KEAK) and 36–57 (KESK…KKDS). Residues 1–88 (MSSSLGKEKD…PGTRKKSSNA (88 aa)) are disordered. Residues 63–66 (GVAF) carry the RVxF motif; important for interaction with PP1c motif. 20 LRR repeats span residues 101 to 122 (NSMR…IKEL), 124 to 145 (QLTE…VGCL), 147 to 169 (NLMT…DNLK), 170 to 191 (KLRM…VYRL), 193 to 214 (SLTT…IKNL), 216 to 237 (KLSM…IGEL), 239 to 260 (NLIT…IGNC), 262 to 283 (QITN…IGNL), 285 to 307 (SLSR…AKCS), 308 to 329 (ALEE…LLSS), 332 to 353 (KLNS…GPSQ), 356 to 377 (TIYS…IFSR), 380 to 400 (VLSK…DFGT), 403 to 424 (SMVE…VSGL), 426 to 448 (SLEV…GNLR), 449 to 470 (KLRE…IAYL), 472 to 494 (DLQK…GHLT), 495 to 516 (NLTH…IGTL), 518 to 540 (NLEE…LALC), and 542 to 563 (KLSI…IVAG).

This sequence belongs to the SHOC2 family. In terms of assembly, component of the SHOC2-MRAS-PP1c (SMP) complex consisting of SHOC2, GTP-bound M-Ras/MRAS and the catalytic subunit of protein phosphatase 1 (either PPP1CA, PPP1CB or PPP1CC). SHOC2 and PP1c preferably bind M-Ras/MRAS, but they also bind K-Ras/KRAS, N-Ras/NRAS and H-Ras/HRAS; these interactions are GTP-dependent and both SHOC2 and PP1c are required to form a stable complex. Interacts with PP1c in the absence of Ras GTPases. Interacts with M-Ras/MRAS and RAF1. Interacts with ERBIN; disrupts the interaction with RAF1 and Ras, preventing the activation of the Ras signaling pathway. Interacts with LZTR1.

The protein localises to the cytoplasm. It localises to the nucleus. Core component of the SHOC2-MRAS-PP1c (SMP) holophosphatase complex that regulates activation of the MAPK pathway. Acts as a scaffolding protein in the SMP complex. The SMP complex specifically dephosphorylates the inhibitory phosphorylation at 'Ser-259' of RAF1 kinase, 'Ser-365' of BRAF kinase and 'Ser-214' of ARAF kinase, stimulating their kinase activities. The SMP complex enhances the dephosphorylation activity and substrate specificity of PP1c. This is Leucine-rich repeat protein SHOC-2 (SHOC2) from Bos taurus (Bovine).